Here is a 422-residue protein sequence, read N- to C-terminus: Vitellogenin-2 (422 aa).

An N-terminal signal peptide occupies residues 1–20 (MNPLTIFCLVAVLLSAATAH). 2 disordered regions span residues 161 to 191 (QGEQ…KPNG) and 399 to 422 (FGKS…GRPN). Residues 180 to 189 (NRPNGQQPKP) show a composition bias toward polar residues.

Belongs to the AB hydrolase superfamily. Lipase family. As to expression, synthesized in the fat body and ovarian follicle cells and accumulate in the oocyte.

It localises to the secreted. In terms of biological role, vitellogenin is the major yolk protein of eggs where it is used as a food source during embryogenesis. In Ceratitis capitata (Mediterranean fruit fly), this protein is Vitellogenin-2 (VG2-delta).